The chain runs to 73 residues: Conotoxin Vc6.17 (73 aa).

Positions 1 to 19 are cleaved as a signal peptide; that stretch reads MQKLIILLLVAAVLMSTQA. The propeptide occupies 20-44; that stretch reads LFQEKRRKEKIDLLSKRKTDAEKQH. Disulfide bonds link C48–C62, C55–C66, and C61–C71.

This sequence belongs to the conotoxin O2 superfamily. As to expression, expressed by the venom duct.

The protein resides in the secreted. Inhibits voltage-gated ion channels. This is Conotoxin Vc6.17 from Conus victoriae (Queen Victoria cone).